Here is a 635-residue protein sequence, read N- to C-terminus: Biosynthetic arginine decarboxylase (635 aa).

Residue K100 is modified to N6-(pyridoxal phosphate)lysine. 282 to 292 (LDIGGGLGVDY) provides a ligand contact to substrate.

The protein belongs to the Orn/Lys/Arg decarboxylase class-II family. SpeA subfamily. Mg(2+) is required as a cofactor. The cofactor is pyridoxal 5'-phosphate.

It catalyses the reaction L-arginine + H(+) = agmatine + CO2. The protein operates within amine and polyamine biosynthesis; agmatine biosynthesis; agmatine from L-arginine: step 1/1. Catalyzes the biosynthesis of agmatine from arginine. The polypeptide is Biosynthetic arginine decarboxylase (Trichlorobacter lovleyi (strain ATCC BAA-1151 / DSM 17278 / SZ) (Geobacter lovleyi)).